The following is a 352-amino-acid chain: Ion-translocating oxidoreductase complex subunit D (352 aa).

Transmembrane regions (helical) follow at residues 20–40, 42–62, 78–109, 123–143, and 148–168; these read IMLLVLLAAVPGIAAQLWFFG, GTLVQILLASVSALLAEALVL, ALLTGLLLAVSIPPLAPWWMVVLGTVFAVIIA, PAMIGYVVLLISFPVQMTSWL, and IAVNIPGFIDAIQVIFSGHTA. Residue Thr-187 is modified to FMN phosphoryl threonine. Transmembrane regions (helical) follow at residues 214–234, 242–262, 267–287, 301–321, and 322–342; these read ILAGAGWQWVNLAWLAGGVWL, WHIPLSFLVTLTLCATLGWLF, LAAPQIHLLSGATMLGAFFIL, LIFGALAGLLVWLIRSFGGYP, and DGVAFAVLLANITVPLIDYYT.

Belongs to the NqrB/RnfD family. The complex is composed of six subunits: RsxA, RsxB, RsxC, RsxD, RsxE and RsxG. The cofactor is FMN.

It is found in the cell inner membrane. Its function is as follows. Part of a membrane-bound complex that couples electron transfer with translocation of ions across the membrane. Required to maintain the reduced state of SoxR. This is Ion-translocating oxidoreductase complex subunit D from Escherichia coli O139:H28 (strain E24377A / ETEC).